The following is a 32-amino-acid chain: Trypsin inhibitor 2b (32 aa).

3 cysteine pairs are disulfide-bonded: Cys-3–Cys-20, Cys-10–Cys-22, and Cys-16–Cys-29.

It belongs to the protease inhibitor I7 (squash-type serine protease inhibitor) family.

The protein resides in the secreted. Inhibits trypsin. The chain is Trypsin inhibitor 2b from Cucumis sativus (Cucumber).